The following is a 241-amino-acid chain: Guanosine phosphorylase (241 aa).

Belongs to the PNP/UDP phosphorylase family.

It carries out the reaction guanosine + phosphate = alpha-D-ribose 1-phosphate + guanine. The enzyme catalyses a purine D-ribonucleoside + phosphate = a purine nucleobase + alpha-D-ribose 1-phosphate. The catalysed reaction is inosine + phosphate = alpha-D-ribose 1-phosphate + hypoxanthine. It catalyses the reaction adenosine + phosphate = alpha-D-ribose 1-phosphate + adenine. With respect to regulation, activity is higher at low KCl concentrations. Phosphorylase involved in the non-carboxylating pentose bisphosphate pathway, a nucleoside degradation pathway present in some halophilic archaea. Catalyzes the phosphorolytic cleavage of guanosine to guanine and ribose-1-phosphate (R1P). Exhibits the highest activity toward guanosine, but also shows lower activity against inosine and adenosine. The sequence is that of Guanosine phosphorylase from Halorubrum lacusprofundi (strain ATCC 49239 / DSM 5036 / JCM 8891 / ACAM 34).